Reading from the N-terminus, the 188-residue chain is Elongation factor P (188 aa).

It belongs to the elongation factor P family.

Its subcellular location is the cytoplasm. Its pathway is protein biosynthesis; polypeptide chain elongation. In terms of biological role, involved in peptide bond synthesis. Stimulates efficient translation and peptide-bond synthesis on native or reconstituted 70S ribosomes in vitro. Probably functions indirectly by altering the affinity of the ribosome for aminoacyl-tRNA, thus increasing their reactivity as acceptors for peptidyl transferase. The chain is Elongation factor P (efp) from Ureaplasma parvum serovar 3 (strain ATCC 700970).